The primary structure comprises 103 residues: ATP synthase F(0) complex subunit g, mitochondrial (103 aa).

Alanine 2 is modified (N-acetylalanine). N6-acetyllysine is present on residues lysine 11, lysine 24, lysine 35, and lysine 54.

As to quaternary structure, component of the ATP synthase complex composed at least of ATP5F1A/subunit alpha, ATP5F1B/subunit beta, ATP5MC1/subunit c (homooctomer), MT-ATP6/subunit a, MT-ATP8/subunit 8, ATP5ME/subunit e, ATP5MF/subunit f, ATP5MG/subunit g, ATP5MK/subunit k, ATP5MJ/subunit j, ATP5F1C/subunit gamma, ATP5F1D/subunit delta, ATP5F1E/subunit epsilon, ATP5PF/subunit F6, ATP5PB/subunit b, ATP5PD/subunit d, ATP5PO/subunit OSCP. ATP synthase complex consists of a soluble F(1) head domain (subunits alpha(3) and beta(3)) - the catalytic core - and a membrane F(0) domain - the membrane proton channel (subunits c, a, 8, e, f, g, k and j). These two domains are linked by a central stalk (subunits gamma, delta, and epsilon) rotating inside the F1 region and a stationary peripheral stalk (subunits F6, b, d, and OSCP).

It localises to the mitochondrion. Its subcellular location is the mitochondrion inner membrane. Its function is as follows. Subunit g, of the mitochondrial membrane ATP synthase complex (F(1)F(0) ATP synthase or Complex V) that produces ATP from ADP in the presence of a proton gradient across the membrane which is generated by electron transport complexes of the respiratory chain. ATP synthase complex consist of a soluble F(1) head domain - the catalytic core - and a membrane F(1) domain - the membrane proton channel. These two domains are linked by a central stalk rotating inside the F(1) region and a stationary peripheral stalk. During catalysis, ATP synthesis in the catalytic domain of F(1) is coupled via a rotary mechanism of the central stalk subunits to proton translocation. In vivo, can only synthesize ATP although its ATP hydrolase activity can be activated artificially in vitro. Part of the complex F(0) domain. The chain is ATP synthase F(0) complex subunit g, mitochondrial from Bos taurus (Bovine).